Reading from the N-terminus, the 193-residue chain is Acyl carrier protein phosphodiesterase (193 aa).

Belongs to the AcpH family.

The enzyme catalyses holo-[ACP] + H2O = apo-[ACP] + (R)-4'-phosphopantetheine + H(+). Converts holo-ACP to apo-ACP by hydrolytic cleavage of the phosphopantetheine prosthetic group from ACP. This chain is Acyl carrier protein phosphodiesterase, found in Escherichia coli O157:H7.